The chain runs to 616 residues: Matrix metalloproteinase-21 (616 aa).

Positions methionine 1–glutamine 22 are cleaved as a signal peptide. The propeptide occupies glutamate 23 to arginine 192. A Cysteine switch motif is present at residues proline 139–asparagine 146. Residue cysteine 141 participates in Zn(2+) binding. Residues serine 157 to serine 186 form a disordered region. Residues asparagine 161, asparagine 172, and asparagine 181 are each glycosylated (N-linked (GlcNAc...) asparagine). Histidine 329 contributes to the Zn(2+) binding site. The active site involves glutamate 330. Zn(2+) contacts are provided by histidine 333 and histidine 339. Cysteines 375 and 606 form a disulfide. 4 Hemopexin repeats span residues glutamate 376 to isoleucine 435, alanine 437 to isoleucine 493, proline 494 to valine 542, and phenylalanine 549 to isoleucine 605. A glycan (N-linked (GlcNAc...) asparagine) is linked at asparagine 418. A glycan (N-linked (GlcNAc...) asparagine) is linked at asparagine 597.

The protein belongs to the peptidase M10A family. It depends on Zn(2+) as a cofactor. The cofactor is Ca(2+). Post-translationally, the precursor is cleaved by a furin endopeptidase.

The protein localises to the secreted. Functionally, may play a role in gastrulation-related cell movement. Plays a specialized role in the generation of left-right asymmetry during embryogenesis. May act as a negative regulator of the NOTCH-signaling pathway. The chain is Matrix metalloproteinase-21 (MMP21) from Cynops pyrrhogaster (Japanese fire-bellied newt).